Consider the following 345-residue polypeptide: Sulfate/thiosulfate import ATP-binding protein CysA (345 aa).

An ABC transporter domain is found at 3–237 (IQVSGLCKHF…PRTEFVYQFV (235 aa)). 35-42 (GPSGCGKT) serves as a coordination point for ATP.

This sequence belongs to the ABC transporter superfamily. Sulfate/tungstate importer (TC 3.A.1.6) family. As to quaternary structure, the complex is composed of two ATP-binding proteins (CysA), two transmembrane proteins (CysT and CysW) and a solute-binding protein (CysP).

It localises to the cell inner membrane. The catalysed reaction is sulfate(out) + ATP + H2O = sulfate(in) + ADP + phosphate + H(+). It carries out the reaction thiosulfate(out) + ATP + H2O = thiosulfate(in) + ADP + phosphate + H(+). Functionally, part of the ABC transporter complex CysAWTP involved in sulfate/thiosulfate import. Responsible for energy coupling to the transport system. The polypeptide is Sulfate/thiosulfate import ATP-binding protein CysA (Vibrio vulnificus (strain CMCP6)).